The sequence spans 489 residues: Ribulose bisphosphate carboxylase large chain 2 (489 aa).

Substrate contacts are provided by asparagine 128 and threonine 178. The Proton acceptor role is filled by lysine 180. Lysine 182 is a substrate binding site. 3 residues coordinate Mg(2+): lysine 206, aspartate 208, and glutamate 209. The residue at position 206 (lysine 206) is an N6-carboxylysine. Histidine 298 serves as the catalytic Proton acceptor. Substrate is bound by residues arginine 299, histidine 331, and serine 383.

Belongs to the RuBisCO large chain family. Type I subfamily. In terms of assembly, heterohexadecamer of 8 large chains and 8 small chains. It depends on Mg(2+) as a cofactor.

It carries out the reaction 2 (2R)-3-phosphoglycerate + 2 H(+) = D-ribulose 1,5-bisphosphate + CO2 + H2O. It catalyses the reaction D-ribulose 1,5-bisphosphate + O2 = 2-phosphoglycolate + (2R)-3-phosphoglycerate + 2 H(+). Its function is as follows. RuBisCO catalyzes two reactions: the carboxylation of D-ribulose 1,5-bisphosphate, the primary event in carbon dioxide fixation, as well as the oxidative fragmentation of the pentose substrate. Both reactions occur simultaneously and in competition at the same active site. This is Ribulose bisphosphate carboxylase large chain 2 from Nitrobacter winogradskyi (strain ATCC 25391 / DSM 10237 / CIP 104748 / NCIMB 11846 / Nb-255).